Here is an 874-residue protein sequence, read N- to C-terminus: Alanine--tRNA ligase (874 aa).

Residues His-562, His-566, Cys-665, and His-669 each contribute to the Zn(2+) site.

This sequence belongs to the class-II aminoacyl-tRNA synthetase family. Zn(2+) is required as a cofactor.

It localises to the cytoplasm. The catalysed reaction is tRNA(Ala) + L-alanine + ATP = L-alanyl-tRNA(Ala) + AMP + diphosphate. In terms of biological role, catalyzes the attachment of alanine to tRNA(Ala) in a two-step reaction: alanine is first activated by ATP to form Ala-AMP and then transferred to the acceptor end of tRNA(Ala). Also edits incorrectly charged Ser-tRNA(Ala) and Gly-tRNA(Ala) via its editing domain. In Pseudomonas fluorescens (strain Pf0-1), this protein is Alanine--tRNA ligase.